The chain runs to 346 residues: Nicotinate-nucleotide--dimethylbenzimidazole phosphoribosyltransferase (346 aa).

The active-site Proton acceptor is the Glu313.

It belongs to the CobT family.

The enzyme catalyses 5,6-dimethylbenzimidazole + nicotinate beta-D-ribonucleotide = alpha-ribazole 5'-phosphate + nicotinate + H(+). It participates in nucleoside biosynthesis; alpha-ribazole biosynthesis; alpha-ribazole from 5,6-dimethylbenzimidazole: step 1/2. Catalyzes the synthesis of alpha-ribazole-5'-phosphate from nicotinate mononucleotide (NAMN) and 5,6-dimethylbenzimidazole (DMB). The chain is Nicotinate-nucleotide--dimethylbenzimidazole phosphoribosyltransferase from Parabacteroides distasonis (strain ATCC 8503 / DSM 20701 / CIP 104284 / JCM 5825 / NCTC 11152).